A 172-amino-acid chain; its full sequence is 3-phenylpropionate/cinnamic acid dioxygenase subunit beta (172 aa).

This sequence belongs to the bacterial ring-hydroxylating dioxygenase beta subunit family. As to quaternary structure, this dioxygenase system consists of four proteins: the two subunits of the hydroxylase component (HcaE and HcaF), a ferredoxin (HcaC) and a ferredoxin reductase (HcaD).

The enzyme catalyses 3-phenylpropanoate + NADH + O2 + H(+) = 3-(cis-5,6-dihydroxycyclohexa-1,3-dien-1-yl)propanoate + NAD(+). The catalysed reaction is (E)-cinnamate + NADH + O2 + H(+) = (2E)-3-(cis-5,6-dihydroxycyclohexa-1,3-dien-1-yl)prop-2-enoate + NAD(+). It functions in the pathway aromatic compound metabolism; 3-phenylpropanoate degradation. Functionally, part of the multicomponent 3-phenylpropionate dioxygenase. Converts 3-phenylpropionic acid (PP) and cinnamic acid (CI) into 3-phenylpropionate-dihydrodiol (PP-dihydrodiol) and cinnamic acid-dihydrodiol (CI-dihydrodiol), respectively. The sequence is that of 3-phenylpropionate/cinnamic acid dioxygenase subunit beta from Escherichia coli O7:K1 (strain IAI39 / ExPEC).